A 437-amino-acid chain; its full sequence is MEFQIDVDFQNRKTEMFINGDDDLFPEMGDEDDSDGEDTLRNIEETTKKMMLASPDYLSFEELGANMIDCMSTGDVKMLIIEEGKGPLVPVDSEVTIHYAAYWEKAVIPFDSTLTMNMGAPKRLRLGTGKIIPGLEIGLTMVKGPQARLNLLVQPAAAWGPRGVPPRIRPEPALFVIVLYDVKDNYAATRFNDLPMAEQTKYEVTLRTVNALRADAKELYKKKKYVKAIKNYQQAISVLRLSRPGTADEELDIKNNKVNAYLNLAVCYYKTNKPKHVLNMCECLDRLIDTEKHCKALYYYGKAHEMLGKTEMAIKYYKKALKLEPKNKEIGKILADLDTKTKDFAVNEKAMWLKAFNVEVPATNAVYDVDATFQSDVLDMCQSLAGRSEFAKFDLPVGLTKNEVDCIKGIVSDFGCLSVDVSGEGRNKKVCIVKKIV.

Positions 92–178 (DSEVTIHYAA…RPEPALFVIV (87 aa)) constitute a PPIase FKBP-type domain. 3 TPR repeats span residues 209–242 (VNALRADAKELYKKKKYVKAIKNYQQAISVLRLS), 258–294 (VNAYLNLAVCYYKTNKPKHVLNMCECLDRLIDTEKHC), and 295–327 (KALYYYGKAHEMLGKTEMAIKYYKKALKLEPKN).

Belongs to the FKBP6 family. Interacts with Hsp83.

It localises to the cytoplasm. Functionally, co-chaperone required during oogenesis to repress transposable elements and prevent their mobilization, which is essential for the germline integrity. Acts via the piRNA metabolic process, which mediates the repression of transposable elements during meiosis by forming complexes composed of piRNAs and Piwi proteins and govern the methylation and subsequent repression of transposons. Acts as a co-chaperone via its interaction with Hsp83/HSP90 and is required for the biogenesis of all three piRNA major populations. This chain is Inactive peptidyl-prolyl cis-trans isomerase shutdown (shu), found in Bombyx mori (Silk moth).